The following is a 299-amino-acid chain: Protoheme IX farnesyltransferase (299 aa).

Transmembrane regions (helical) follow at residues 27 to 47 (VVALMLLTSVVGMSLAPHEHF), 53 to 73 (LIALVGIALMAGSAAAFNHLI), 97 to 117 (FNVLLFALLIGSLGFLSLMLW), 121 to 141 (LTAYLTFASLLGYAAVYTLYL), 149 to 169 (IVIAGIAGAMPPLLGWTSITG), 175 to 195 (AWVLVMIIFIWTPPHFWALAI), 222 to 242 (ILLYAILLALVCMLPVLVGMA), 244 to 264 (YLYLFSALVLNVCFVRYAIKL), and 273 to 293 (AIEMFRFSIYFLLLLFCALLL).

It belongs to the UbiA prenyltransferase family. Protoheme IX farnesyltransferase subfamily.

It is found in the cell inner membrane. The catalysed reaction is heme b + (2E,6E)-farnesyl diphosphate + H2O = Fe(II)-heme o + diphosphate. The protein operates within porphyrin-containing compound metabolism; heme O biosynthesis; heme O from protoheme: step 1/1. Functionally, converts heme B (protoheme IX) to heme O by substitution of the vinyl group on carbon 2 of heme B porphyrin ring with a hydroxyethyl farnesyl side group. This is Protoheme IX farnesyltransferase from Vibrio vulnificus (strain CMCP6).